A 143-amino-acid chain; its full sequence is Transcriptional regulator MraZ (143 aa).

2 SpoVT-AbrB domains span residues 5 to 47 and 76 to 119; these read EYQH…PQEE and ASEC…SKSE.

It belongs to the MraZ family. In terms of assembly, forms oligomers.

It is found in the cytoplasm. Its subcellular location is the nucleoid. The polypeptide is Transcriptional regulator MraZ (Listeria welshimeri serovar 6b (strain ATCC 35897 / DSM 20650 / CCUG 15529 / CIP 8149 / NCTC 11857 / SLCC 5334 / V8)).